Reading from the N-terminus, the 492-residue chain is Bifunctional shikimate kinase/3-dehydroquinate synthase (492 aa).

The segment at 1–161 (MRIFLVGMMG…TALVVLEALD (161 aa)) is shikimate kinase. 10-15 (GSGKST) serves as a coordination point for ATP. Ser14 is a binding site for Mg(2+). 3 residues coordinate substrate: Asp32, Arg56, and Gly78. Arg114 provides a ligand contact to ATP. Arg131 is a binding site for substrate. The 3-dehydroquinate synthase stretch occupies residues 162-492 (EKEISTIEKP…DPLELLEVVD (331 aa)).

The protein in the N-terminal section; belongs to the shikimate kinase family. In the C-terminal section; belongs to the sugar phosphate cyclases superfamily. Dehydroquinate synthase family. The cofactor is Mg(2+). It depends on NAD(+) as a cofactor. Requires a divalent metal cation as cofactor.

The protein localises to the cytoplasm. It catalyses the reaction 7-phospho-2-dehydro-3-deoxy-D-arabino-heptonate = 3-dehydroquinate + phosphate. It carries out the reaction shikimate + ATP = 3-phosphoshikimate + ADP + H(+). It functions in the pathway metabolic intermediate biosynthesis; chorismate biosynthesis; chorismate from D-erythrose 4-phosphate and phosphoenolpyruvate: step 2/7. It participates in metabolic intermediate biosynthesis; chorismate biosynthesis; chorismate from D-erythrose 4-phosphate and phosphoenolpyruvate: step 5/7. Functionally, catalyzes the specific phosphorylation of the 3-hydroxyl group of shikimic acid using ATP as a cosubstrate. This is Bifunctional shikimate kinase/3-dehydroquinate synthase (aroKB) from Thermotoga maritima (strain ATCC 43589 / DSM 3109 / JCM 10099 / NBRC 100826 / MSB8).